The chain runs to 208 residues: Ribonuclease HII (208 aa).

An RNase H type-2 domain is found at 1-205; the sequence is MIVVGIDEAG…LQEIAPNYYI (205 aa). Residues D7, E8, and D104 each coordinate a divalent metal cation.

The protein belongs to the RNase HII family. It depends on Mn(2+) as a cofactor. Mg(2+) serves as cofactor.

Its subcellular location is the cytoplasm. It carries out the reaction Endonucleolytic cleavage to 5'-phosphomonoester.. Its function is as follows. Endonuclease that specifically degrades the RNA of RNA-DNA hybrids. In Sulfurisphaera tokodaii (strain DSM 16993 / JCM 10545 / NBRC 100140 / 7) (Sulfolobus tokodaii), this protein is Ribonuclease HII.